Here is a 361-residue protein sequence, read N- to C-terminus: Chorismate synthase (361 aa).

A compositionally biased stretch (basic and acidic residues) spans 38-49; sequence EKDMQHDLDRRR. Positions 38 to 58 are disordered; it reads EKDMQHDLDRRRPGTSKYTTQ. Arg-48 lines the NADP(+) pocket. FMN contacts are provided by residues 125–127, 238–239, Gly-278, 293–297, and Arg-319; these read RSS, NA, and KPTSS.

The protein belongs to the chorismate synthase family. As to quaternary structure, homotetramer. Requires FMNH2 as cofactor.

It carries out the reaction 5-O-(1-carboxyvinyl)-3-phosphoshikimate = chorismate + phosphate. It participates in metabolic intermediate biosynthesis; chorismate biosynthesis; chorismate from D-erythrose 4-phosphate and phosphoenolpyruvate: step 7/7. Catalyzes the anti-1,4-elimination of the C-3 phosphate and the C-6 proR hydrogen from 5-enolpyruvylshikimate-3-phosphate (EPSP) to yield chorismate, which is the branch point compound that serves as the starting substrate for the three terminal pathways of aromatic amino acid biosynthesis. This reaction introduces a second double bond into the aromatic ring system. This Photobacterium profundum (strain SS9) protein is Chorismate synthase.